A 393-amino-acid polypeptide reads, in one-letter code: L-methionine gamma-lyase (393 aa).

Pyridoxal 5'-phosphate is bound by residues 63 to 65 and 93 to 94; these read YQR and GM. Tyrosine 119 contacts L-homocysteine. 206-208 is a pyridoxal 5'-phosphate binding site; it reads SAT. Lysine 209 is modified (N6-(pyridoxal phosphate)lysine). L-homocysteine is bound at residue arginine 367. Arginine 367 serves as a coordination point for L-methionine.

It belongs to the trans-sulfuration enzymes family. L-methionine gamma-lyase subfamily. As to quaternary structure, homotetramer. Pyridoxal 5'-phosphate is required as a cofactor.

The enzyme catalyses L-methionine + H2O = methanethiol + 2-oxobutanoate + NH4(+). It carries out the reaction L-homocysteine + H2O = 2-oxobutanoate + hydrogen sulfide + NH4(+) + H(+). Its function is as follows. Catalyzes the alpha,gamma-elimination of L-methionine to produce methanethiol, 2-oxobutanoate and ammonia. Is also able to catalyze the alpha,gamma-elimination of L-homocysteine. This is L-methionine gamma-lyase from Brevibacterium sandarakinum.